A 104-amino-acid polypeptide reads, in one-letter code: NADH-quinone oxidoreductase subunit K (104 aa).

Helical transmembrane passes span 4 to 24 (VPAS…LFGA), 31 to 51 (VIVL…LVAF), and 67 to 87 (LFTM…LIAL).

It belongs to the complex I subunit 4L family. NDH-1 is composed of 14 different subunits. Subunits NuoA, H, J, K, L, M, N constitute the membrane sector of the complex.

The protein localises to the cell membrane. It carries out the reaction a quinone + NADH + 5 H(+)(in) = a quinol + NAD(+) + 4 H(+)(out). In terms of biological role, NDH-1 shuttles electrons from NADH, via FMN and iron-sulfur (Fe-S) centers, to quinones in the respiratory chain. The immediate electron acceptor for the enzyme in this species is believed to be a menaquinone. Couples the redox reaction to proton translocation (for every two electrons transferred, four hydrogen ions are translocated across the cytoplasmic membrane), and thus conserves the redox energy in a proton gradient. This Bacillus cereus (strain ATCC 14579 / DSM 31 / CCUG 7414 / JCM 2152 / NBRC 15305 / NCIMB 9373 / NCTC 2599 / NRRL B-3711) protein is NADH-quinone oxidoreductase subunit K.